The primary structure comprises 578 residues: A-type ATP synthase subunit A (578 aa).

228-235 (GPFGSGKT) lines the ATP pocket.

It belongs to the ATPase alpha/beta chains family. Has multiple subunits with at least A(3), B(3), C, D, E, F, H, I and proteolipid K(x).

Its subcellular location is the cell membrane. The enzyme catalyses ATP + H2O + 4 H(+)(in) = ADP + phosphate + 5 H(+)(out). Component of the A-type ATP synthase that produces ATP from ADP in the presence of a proton gradient across the membrane. The A chain is the catalytic subunit. In Methanosarcina acetivorans (strain ATCC 35395 / DSM 2834 / JCM 12185 / C2A), this protein is A-type ATP synthase subunit A.